The following is a 463-amino-acid chain: uncharacterized protein (463 aa).

12 helical membrane-spanning segments follow: residues isoleucine 17–alanine 37, leucine 40–methionine 60, tryptophan 97–phenylalanine 117, valine 122–alanine 142, phenylalanine 153–isoleucine 173, glycine 201–valine 221, isoleucine 244–isoleucine 264, valine 278–serine 298, alanine 335–alanine 355, valine 357–leucine 377, leucine 401–alanine 421, and alanine 429–phenylalanine 449.

The protein belongs to the amino acid-polyamine-organocation (APC) superfamily.

The protein localises to the cell membrane. This is an uncharacterized protein from Bacillus subtilis (strain 168).